Reading from the N-terminus, the 65-residue chain is Large ribosomal subunit protein bL35 (65 aa).

It belongs to the bacterial ribosomal protein bL35 family.

The protein is Large ribosomal subunit protein bL35 of Thermoanaerobacter pseudethanolicus (strain ATCC 33223 / 39E) (Clostridium thermohydrosulfuricum).